We begin with the raw amino-acid sequence, 128 residues long: MAIWQGTSKRKSTGAKLRLVTKKHKREMGRPAVETHISAVIKRKIVRCRGANLKVKLEKTNYANVFDQVNKVCKKVLVTKVIDNKANKHYIRRNVITKGAIIETEMGKAKVTSRPGQDGVVNAVLLSE.

The protein belongs to the eukaryotic ribosomal protein eS8 family. As to quaternary structure, part of the 30S ribosomal subunit.

This Methanococcus vannielii (strain ATCC 35089 / DSM 1224 / JCM 13029 / OCM 148 / SB) protein is Small ribosomal subunit protein eS8.